Here is a 128-residue protein sequence, read N- to C-terminus: Large ribosomal subunit protein uL24 (128 aa).

The segment at 105-128 is disordered; that stretch reads KAKSRQVGKEKGKYKEETIEKMQE.

This sequence belongs to the universal ribosomal protein uL24 family. As to quaternary structure, component of the large ribosomal subunit.

Its subcellular location is the cytoplasm. In terms of biological role, component of the large ribosomal subunit. The ribosome is a large ribonucleoprotein complex responsible for the synthesis of proteins in the cell. This is Large ribosomal subunit protein uL24 (RPL26) from Gallus gallus (Chicken).